The sequence spans 348 residues: Uroporphyrinogen decarboxylase (348 aa).

Substrate is bound by residues 28–32, Asp78, Tyr154, Thr209, and His325; that span reads RQAGR.

It belongs to the uroporphyrinogen decarboxylase family. In terms of assembly, homodimer.

The protein localises to the cytoplasm. The catalysed reaction is uroporphyrinogen III + 4 H(+) = coproporphyrinogen III + 4 CO2. It participates in porphyrin-containing compound metabolism; protoporphyrin-IX biosynthesis; coproporphyrinogen-III from 5-aminolevulinate: step 4/4. In terms of biological role, catalyzes the decarboxylation of four acetate groups of uroporphyrinogen-III to yield coproporphyrinogen-III. The polypeptide is Uroporphyrinogen decarboxylase (Rhodopseudomonas palustris (strain HaA2)).